Here is a 348-residue protein sequence, read N- to C-terminus: Hereditary hemochromatosis protein (348 aa).

A signal peptide spans 1-22 (MGPRARPALLLLMLLQTAVLQG). Residues 23–114 (RLLRSHSLHY…IMENHNHSKE (92 aa)) are alpha-1. Topologically, residues 23–306 (RLLRSHSLHY…WEPSPSGTLV (284 aa)) are extracellular. N-linked (GlcNAc...) asparagine glycosylation is found at N110, N130, and N234. The segment at 115-205 (SHTLQVILGC…ELGRGVLDQQ (91 aa)) is alpha-2. Disulfide bonds link C124-C187 and C225-C282. Residues 206–297 (VPPLVKVTHH…GLDQPLIVIW (92 aa)) are alpha-3. In terms of domain architecture, Ig-like C1-type spans 207 to 298 (PPLVKVTHHV…LDQPLIVIWE (92 aa)). The tract at residues 298-306 (EPSPSGTLV) is connecting peptide. The helical transmembrane segment at 307-330 (IGVISGIAVFVVILFIGILFIILR) threads the bilayer. The Cytoplasmic segment spans residues 331–348 (KRQGSRGAMGHYVLAERE).

The protein belongs to the MHC class I family. As to quaternary structure, binds TFR through the extracellular domain in a pH-dependent manner. In terms of tissue distribution, expressed in all tissues tested except brain.

It is found in the cell membrane. Its function is as follows. Binds to transferrin receptor (TFR) and reduces its affinity for iron-loaded transferrin. The polypeptide is Hereditary hemochromatosis protein (HFE) (Homo sapiens (Human)).